The sequence spans 258 residues: Imidazole glycerol phosphate synthase subunit HisF (258 aa).

Catalysis depends on residues D11 and D130.

This sequence belongs to the HisA/HisF family. Heterodimer of HisH and HisF.

It is found in the cytoplasm. It catalyses the reaction 5-[(5-phospho-1-deoxy-D-ribulos-1-ylimino)methylamino]-1-(5-phospho-beta-D-ribosyl)imidazole-4-carboxamide + L-glutamine = D-erythro-1-(imidazol-4-yl)glycerol 3-phosphate + 5-amino-1-(5-phospho-beta-D-ribosyl)imidazole-4-carboxamide + L-glutamate + H(+). Its pathway is amino-acid biosynthesis; L-histidine biosynthesis; L-histidine from 5-phospho-alpha-D-ribose 1-diphosphate: step 5/9. In terms of biological role, IGPS catalyzes the conversion of PRFAR and glutamine to IGP, AICAR and glutamate. The HisF subunit catalyzes the cyclization activity that produces IGP and AICAR from PRFAR using the ammonia provided by the HisH subunit. This Baumannia cicadellinicola subsp. Homalodisca coagulata protein is Imidazole glycerol phosphate synthase subunit HisF.